A 210-amino-acid chain; its full sequence is Somatotropin-2 (210 aa).

An N-terminal signal peptide occupies residues 1-22 (MGQVFLLMPVLLVSCFLGQGAA). His-38 lines the Zn(2+) pocket. A disulfide bridge connects residues Cys-71 and Cys-183. Residue Glu-192 participates in Zn(2+) binding. A disulfide bridge links Cys-200 with Cys-208.

Belongs to the somatotropin/prolactin family.

It is found in the secreted. Functionally, growth hormone plays an important role in growth control and is involved in the regulation of several anabolic processes. Implicated as an osmoregulatory substance important for seawater adaptation. The sequence is that of Somatotropin-2 (gh2) from Oncorhynchus mykiss (Rainbow trout).